Consider the following 696-residue polypeptide: Probable glutamine--fructose-6-phosphate aminotransferase [isomerizing] (696 aa).

C2 serves as the catalytic For GATase activity. The region spanning 2 to 303 (CGIFGYINYL…DDDIAHVRDG (302 aa)) is the Glutamine amidotransferase type-2 domain. SIS domains lie at 375 to 514 (YYDI…DSVS) and 547 to 686 (AIEQ…VDQP).

It catalyses the reaction D-fructose 6-phosphate + L-glutamine = D-glucosamine 6-phosphate + L-glutamate. It participates in nucleotide-sugar biosynthesis; UDP-N-acetyl-alpha-D-glucosamine biosynthesis; alpha-D-glucosamine 6-phosphate from D-fructose 6-phosphate: step 1/1. In terms of biological role, involved in amino sugar synthesis (formation of chitin, supplies the amino sugars of asparagine-linked oligosaccharides of glycoproteins). This is Probable glutamine--fructose-6-phosphate aminotransferase [isomerizing] from Schizosaccharomyces pombe (strain 972 / ATCC 24843) (Fission yeast).